We begin with the raw amino-acid sequence, 336 residues long: DNA topoisomerase 1B (336 aa).

The region spanning 79 to 336 is the Topo IB-type catalytic domain; the sequence is EIHIQGAEKE…KSYRKDVLGE (258 aa). Tyr-294 acts as the O-(3'-phospho-DNA)-tyrosine intermediate in catalysis.

It belongs to the type IB topoisomerase family. In terms of assembly, monomer.

Its subcellular location is the virion. It carries out the reaction ATP-independent breakage of single-stranded DNA, followed by passage and rejoining.. In terms of biological role, releases the supercoiling and torsional tension of DNA introduced during the DNA replication and transcription by transiently cleaving and rejoining one strand of the DNA duplex. Introduces a single-strand break via transesterification at a target site in duplex DNA. The scissile phosphodiester is attacked by the catalytic tyrosine of the enzyme, resulting in the formation of a DNA-(3'-phosphotyrosyl)-enzyme intermediate and the expulsion of a 5'-OH DNA strand. The free DNA strand then undergoes passage around the unbroken strand thus removing DNA supercoils. Finally, in the religation step, the DNA 5'-OH attacks the covalent intermediate to expel the active-site tyrosine and restore the DNA phosphodiester backbone. Cleaves DNA after CCCTT sequence. The sequence is that of DNA topoisomerase 1B (TOP1E) from Acanthamoeba polyphaga mimivirus (APMV).